The chain runs to 561 residues: Solute carrier family 41 member 2 (561 aa).

The Extracellular segment spans residues 1-150 (MTANTGEPYK…KESSIAMALQ (150 aa)). The helical transmembrane segment at 151–171 (ILVPFLLAGFGTVSAGMVLDI) threads the bilayer. The Cytoplasmic segment spans residues 172–183 (VQHWDVFKNLTE). The helical transmembrane segment at 184-204 (VFILVPALLGLKGNLEMTLAS) threads the bilayer. Residues 205–233 (RLSTAVNVGKMDSPIEKWNLIIGNLALKQ) lie on the Extracellular side of the membrane. The chain crosses the membrane as a helical span at residues 234-254 (VQATVVGFLAAVFAVILGWIP). At 255–270 (DGKYQLDHAILLCSSS) the chain is on the cytoplasmic side. Residues 271-291 (VATAFIASLLQGIIMVGVIVG) traverse the membrane as a helical segment. The Extracellular segment spans residues 292-301 (SKKTGINPDN). Residues 302–322 (VATPIAASFGDLITLAILAWI) traverse the membrane as a helical segment. At 323 to 333 (SQGLYNCLGSY) the chain is on the cytoplasmic side. A helical transmembrane segment spans residues 334–354 (AFVSPLVGVFFLAMTPIWIVI). Over 355-364 (ASKHPATRTV) the chain is Extracellular. Residues 365 to 385 (LHSGWEPVITAMLISSIGGLI) form a helical membrane-spanning segment. Over 386–394 (LDTTVSDPN) the chain is Cytoplasmic. The helical transmembrane segment at 395-415 (LVGIVVYTPVINGIGGNLVAI) threads the bilayer. The Extracellular portion of the chain corresponds to 416–457 (QASRISTYLHLYSIPGELPEDAKGCYHPCRTFCGTGVNNKSA). The helical transmembrane segment at 458–478 (QVLLSLVIPGHLIFLYTIYLM) threads the bilayer. Over 479 to 487 (KSGHTSLTP) the chain is Cytoplasmic. The chain crosses the membrane as a helical span at residues 488 to 508 (IFVAVYLLAALLQVFALLWIA). The Extracellular segment spans residues 509 to 531 (DWMVHHIWRKGKDPDSFSIPYLT). Residues 532–552 (ALGDLLGTALLAISFHILWII) traverse the membrane as a helical segment. Residues 553 to 561 (GDRDGDVGD) are Cytoplasmic-facing.

This sequence belongs to the SLC41A transporter family.

It is found in the cell membrane. The enzyme catalyses Mg(2+)(in) = Mg(2+)(out). The catalysed reaction is Mn(2+)(in) = Mn(2+)(out). It carries out the reaction Co(2+)(in) = Co(2+)(out). It catalyses the reaction Ni(2+)(in) = Ni(2+)(out). The enzyme catalyses Fe(2+)(in) = Fe(2+)(out). Acts as a plasma-membrane magnesium transporter. Can also mediate the transport of other divalent metal cations in an order of Ba(2+) &gt; Ni(2+) &gt; Co(2+) &gt; Fe(2+) &gt; Mn(2+). The sequence is that of Solute carrier family 41 member 2 (slc41a2) from Xenopus laevis (African clawed frog).